Reading from the N-terminus, the 1829-residue chain is Protein let-418 (1829 aa).

Composition is skewed to acidic residues over residues 1 to 17 and 25 to 39; these read MSTE…ESME and ATEE…EQGD. Disordered stretches follow at residues 1 to 81 and 147 to 198; these read MSTE…YNST and MAAQ…SDQE. Residues 48–63 show a composition bias toward basic residues; it reads RSSRKKGGKGGKKGSK. PHD-type zinc fingers lie at residues 256 to 303 and 317 to 365; these read NDYC…CIEH and DEFC…CETV. Chromo domains follow at residues 401-458 and 489-550; these read LKPP…PPEF and MQIH…NEDI. The region spanning 614–798 is the Helicase ATP-binding domain; that stretch reads RHCWSNGTDA…FHLLNFLSKE (185 aa). 627–634 is an ATP binding site; the sequence is DEMGLGKT. The DEAH box signature appears at 749–752; the sequence is DEAH. A Helicase C-terminal domain is found at 930–1093; that stretch reads LLQKMLRKLK…GKTMSKTELD (164 aa). Disordered regions lie at residues 1168-1198, 1234-1289, 1415-1495, and 1745-1829; these read ASYQ…EPDP, SENM…MPPL, AANG…ARPS, and NGER…PMET. Positions 1177 to 1186 are enriched in acidic residues; it reads GQEEEEEEET. Composition is skewed to polar residues over residues 1234–1247 and 1418–1427; these read SENM…QNQT and GSAQGSSRST. Residues 1429–1444 show a composition bias toward basic and acidic residues; sequence KPKEEPKEEPMEKEDA. A compositionally biased stretch (polar residues) spans 1446–1455; the sequence is ETVNGATSEP. Residues 1474-1490 show a composition bias toward basic and acidic residues; the sequence is DEAKEPKEEPIETEKPR. Acidic residues predominate over residues 1749 to 1773; it reads MEEDEPVEAEEEEGVKQEPDDETQD. A compositionally biased stretch (low complexity) spans 1792 to 1811; sequence DVPSTSAAAAVSSETAADAE. Acidic residues predominate over residues 1819 to 1829; the sequence is APTDEPEPMET.

Component of the MEC (MEP-1-containing complex) complex that contains let-418, mep-1 and hda-1. Component of a NURD complex that contains let-418, hda-1, lin-40 and lin-53. Interacts with lin-1. Interacts with pie-1. Interacts with akir-1. In terms of tissue distribution, expressed in embryos and larva.

Its subcellular location is the nucleus. In terms of biological role, part of a NuRD (Nucleosome Remodeling and Deacetylase) complex which is implicated in the synMuv B pathway that negatively regulates specification of vulval cell fate. This negative regulation is thought to be mediated via interaction with the promoter of lin-39, a key regulator in vulva development, and is dependent on the presence lin-1. Contributes to negative regulation of lag-2 which is expressed in the gut during larval development. Has a broad role in development. In association with akir-1, plays a role in regulating the transcription of antimicrobial peptide genes in response to fungal infection. The protein is Protein let-418 of Caenorhabditis elegans.